Consider the following 346-residue polypeptide: 3 beta-hydroxysteroid dehydrogenase/Delta 5--&gt;4-isomerase (346 aa).

The active-site Proton acceptor is tyrosine 147. NAD(+) is bound at residue lysine 151.

The protein belongs to the 3-beta-HSD family.

It carries out the reaction a 3beta-hydroxy-Delta(5)-steroid + NAD(+) = a 3-oxo-Delta(5)-steroid + NADH + H(+). The catalysed reaction is a 3-oxo-Delta(5)-steroid = a 3-oxo-Delta(4)-steroid. The protein operates within lipid metabolism; steroid biosynthesis. Functionally, catalyzes the oxidative conversion of Delta(5)-ene-3-beta-hydroxy steroid, and the oxidative conversion of ketosteroids. The 3-beta-HSD enzymatic system plays a crucial role in the biosynthesis of all classes of hormonal steroids. During viral infection, steroid production contributes to virulence by inhibiting the host inflammatory response. This chain is 3 beta-hydroxysteroid dehydrogenase/Delta 5--&gt;4-isomerase (OPG174), found in Homo sapiens (Human).